The chain runs to 88 residues: Small ribosomal subunit protein uS17 (88 aa).

This sequence belongs to the universal ribosomal protein uS17 family. As to quaternary structure, part of the 30S ribosomal subunit.

Its function is as follows. One of the primary rRNA binding proteins, it binds specifically to the 5'-end of 16S ribosomal RNA. This chain is Small ribosomal subunit protein uS17, found in Ligilactobacillus salivarius (strain UCC118) (Lactobacillus salivarius).